Reading from the N-terminus, the 405-residue chain is L-carnitine CoA-transferase (405 aa).

2 residues coordinate CoA: Lys97 and Arg104. Residue Asp169 is the Nucleophile of the active site.

Belongs to the CoA-transferase III family. CaiB subfamily. As to quaternary structure, homodimer.

The protein resides in the cytoplasm. The enzyme catalyses crotonobetainyl-CoA + (R)-carnitine = crotonobetaine + (R)-carnitinyl-CoA. It catalyses the reaction 4-(trimethylamino)butanoyl-CoA + (R)-carnitine = (R)-carnitinyl-CoA + 4-(trimethylamino)butanoate. It participates in amine and polyamine metabolism; carnitine metabolism. Catalyzes the reversible transfer of the CoA moiety from gamma-butyrobetainyl-CoA to L-carnitine to generate L-carnitinyl-CoA and gamma-butyrobetaine. Is also able to catalyze the reversible transfer of the CoA moiety from gamma-butyrobetainyl-CoA or L-carnitinyl-CoA to crotonobetaine to generate crotonobetainyl-CoA. This Salmonella gallinarum (strain 287/91 / NCTC 13346) protein is L-carnitine CoA-transferase.